A 259-amino-acid chain; its full sequence is MSEVKDRALRALQLMDLTTLNDDDTDAKVIALCHQAKSPAGNTAAICIYPRFIPLARKTLREQGTPEIRIATVTNFPHGNDDSEIALAETRAAIAYGADEVDVVFPYRALMAGNEAIGFELVKACKQACREANVLLKVIIESGELKEASLIRKASEIAIDAGADFIKTSTGKVAVNATPEVAEIMLRTIAAKGVQKQVGFKPAGGVRSADDAALYLKLADNILGPDWADARHFRFGASSLLASLLNAAGFNGATSDSNY.

Catalysis depends on Asp-102, which acts as the Proton donor/acceptor. Lys-167 serves as the catalytic Schiff-base intermediate with acetaldehyde. The active-site Proton donor/acceptor is Lys-201.

This sequence belongs to the DeoC/FbaB aldolase family. DeoC type 2 subfamily.

The protein resides in the cytoplasm. The enzyme catalyses 2-deoxy-D-ribose 5-phosphate = D-glyceraldehyde 3-phosphate + acetaldehyde. It functions in the pathway carbohydrate degradation; 2-deoxy-D-ribose 1-phosphate degradation; D-glyceraldehyde 3-phosphate and acetaldehyde from 2-deoxy-alpha-D-ribose 1-phosphate: step 2/2. In terms of biological role, catalyzes a reversible aldol reaction between acetaldehyde and D-glyceraldehyde 3-phosphate to generate 2-deoxy-D-ribose 5-phosphate. The chain is Deoxyribose-phosphate aldolase from Erwinia tasmaniensis (strain DSM 17950 / CFBP 7177 / CIP 109463 / NCPPB 4357 / Et1/99).